Here is a 210-residue protein sequence, read N- to C-terminus: Large ribosomal subunit protein uL4 (210 aa).

Positions 46–96 (QGNASTKTRAEVRGGGRKPWRQKGTGRARAGSNRSPLWRGGGVIFGPKPRD) are disordered. Over residues 60-71 (GGRKPWRQKGTG) the composition is skewed to basic residues.

This sequence belongs to the universal ribosomal protein uL4 family. As to quaternary structure, part of the 50S ribosomal subunit.

One of the primary rRNA binding proteins, this protein initially binds near the 5'-end of the 23S rRNA. It is important during the early stages of 50S assembly. It makes multiple contacts with different domains of the 23S rRNA in the assembled 50S subunit and ribosome. Functionally, forms part of the polypeptide exit tunnel. In Gloeothece citriformis (strain PCC 7424) (Cyanothece sp. (strain PCC 7424)), this protein is Large ribosomal subunit protein uL4.